The primary structure comprises 191 residues: Protein G1-like1 (191 aa).

The interval 1 to 29 (MDMIGMASPAESPGGGGTARPSRYESQKR) is disordered. The region spanning 23–150 (RYESQKRRDW…ARGIAYEKKR (128 aa)) is the ALOG domain. The Nuclear localization signal signature appears at 148-152 (KKRRK). Residues 152–179 (KRAAASHTKQKQQQQQLVEQAAAAAEAH) adopt a coiled-coil conformation.

Belongs to the plant homeotic and developmental regulators ALOG protein family.

It localises to the nucleus. Its function is as follows. Probable transcription regulator that acts as a developmental regulator by promoting cell growth in response to light. This chain is Protein G1-like1, found in Oryza sativa subsp. indica (Rice).